The following is a 247-amino-acid chain: DNA repair protein RecO (247 aa).

The protein belongs to the RecO family.

Involved in DNA repair and RecF pathway recombination. This chain is DNA repair protein RecO, found in Alkalilimnicola ehrlichii (strain ATCC BAA-1101 / DSM 17681 / MLHE-1).